Consider the following 248-residue polypeptide: Myelin protein P0 (248 aa).

The signal sequence occupies residues 1–28 (MAPGAPSSSPSPILAALLFSSLVLSPVQ). Residues 29 to 155 (AIVVYTDKEV…VFEKVPTRYG (127 aa)) lie on the Extracellular side of the membrane. The 114-residue stretch at 30-143 (IVVYTDKEVH…DIVGKTSQVT (114 aa)) folds into the Ig-like V-type domain. Cysteine 50 and cysteine 127 form a disulfide bridge. Asparagine 122 is a glycosylation site (N-linked (GlcNAc...) (complex) asparagine). The helical transmembrane segment at 156–176 (VVLGAVIGGVLGVVLLALLLF) threads the bilayer. Residues 177–248 (YLIRYCWLRR…GLGESRKDKK (72 aa)) lie on the Cytoplasmic side of the membrane. Residue serine 210 is modified to Phosphoserine; by PKC. Residues 224-248 (DHSRSTKAASEKKTKGLGESRKDKK) are disordered. A phosphoserine mark is found at serine 226 and serine 228. Phosphoserine; by PKC is present on residues serine 233 and serine 243.

It belongs to the myelin P0 protein family. In terms of assembly, homodimer and homotetramer. N-glycosylated; contains sulfate-substituted glycan. In terms of tissue distribution, found only in peripheral nervous system Schwann cells.

The protein resides in the cell membrane. Functionally, is an adhesion molecule necessary for normal myelination in the peripheral nervous system. It mediates adhesion between adjacent myelin wraps and ultimately drives myelin compaction. This Bos taurus (Bovine) protein is Myelin protein P0 (MPZ).